Consider the following 309-residue polypeptide: Probable RuBisCO transcriptional regulator (309 aa).

The HTH lysR-type domain maps to F6–T63. Positions F23–Q42 form a DNA-binding region, H-T-H motif.

This sequence belongs to the LysR transcriptional regulatory family.

It localises to the plastid. It is found in the chloroplast. Functionally, trans-acting transcriptional regulator of RuBisCO genes (rbcL and rbcS) expression. The sequence is that of Probable RuBisCO transcriptional regulator (rbcR) from Gracilaria tenuistipitata var. liui (Red alga).